A 2237-amino-acid chain; its full sequence is Activating signal cointegrator 1 complex subunit 3-like (2237 aa).

Disordered regions lie at residues 1 to 48 (MSEE…RGEM), 71 to 118 (TIEK…KPID), 242 to 330 (DEEE…SKLI), and 445 to 472 (EKTI…DEIK). The span at 24–37 (ERNRSELKEPKGEP) shows a compositional bias: basic and acidic residues. A compositionally biased stretch (polar residues) spans 79–97 (VNSSNDTYSTTKKVKNQNP). The span at 105 to 114 (RKSNGNNNNE) shows a compositional bias: low complexity. Acidic residues predominate over residues 242 to 282 (DEEEEEENLSDFEIRDDDDDDDDVDNNEVDDNNNNDSEAQD). Basic and acidic residues-rich tracts occupy residues 312–325 (QKPD…DKNN) and 446–460 (KTIE…DVEM). Positions 440–468 (TAATTEKTIEKTESNKKDVEMKQQQQQQQ) form a coiled coil. The Helicase ATP-binding 1 domain maps to 561 to 745 (DCAFKTDNNL…FLRVEPDGVF (185 aa)). 574 to 581 (APTSSGKT) contributes to the ATP binding site. Residues 687-690 (DEIH) carry the DEAH box motif. Residues 755–990 (PLEQQYIGIS…TVRDAVNWLG (236 aa)) form the Helicase C-terminal 1 domain. One can recognise an SEC63 1 domain in the interval 1050 to 1356 (STELGKVASH…GAEYSLPISF (307 aa)). The Helicase ATP-binding 2 domain maps to 1407 to 1584 (NCMYQSNDNA…WIGATPQTCY (178 aa)). 1420-1427 (APTNSGKT) is an ATP binding site. The DEAH box signature appears at 1526–1529 (DELH). One can recognise a Helicase C-terminal 2 domain in the interval 1657 to 1832 (TLTKPYLVCE…TITKKQDALD (176 aa)). Residues 1892–2215 (PLNLGIIASY…GCDQEHELNI (324 aa)) form the SEC63 2 domain.

The protein belongs to the helicase family.

The chain is Activating signal cointegrator 1 complex subunit 3-like (ascc3l) from Dictyostelium discoideum (Social amoeba).